A 396-amino-acid chain; its full sequence is Microcin B17-processing protein McbD (396 aa).

Positions 41-396 (ASAAGETLKS…VRESKMVPFP (356 aa)) constitute a YcaO domain.

Its subcellular location is the cytoplasm. Functionally, necessary to process the inactive microcin B17 (McbA) precursor into the active peptide. The chain is Microcin B17-processing protein McbD (mcbD) from Escherichia coli.